A 192-amino-acid polypeptide reads, in one-letter code: MVIGILGVQGAVREHQEMLHLLGVKTMIVKSSADLDGIDGLIFPGGESTTIRRLIDRYGLLDVLRRQADTLPMFGTCAGMILLASELTEGPSHLGAIPMTVRRNAFGRQIDSFETSLNVEGAGQDIEAVFIRAPFVEQVGEGVRVLAAIGIAAVVVETDLHLACSFHPELTSDRRLHDYFIQKIRRRTAVSV.

46-48 (GES) serves as a coordination point for L-glutamine. The active-site Nucleophile is the Cys77. Residues Arg103 and 131 to 132 (IR) contribute to the L-glutamine site. Active-site charge relay system residues include His167 and Glu169.

It belongs to the glutaminase PdxT/SNO family. In terms of assembly, in the presence of PdxS, forms a dodecamer of heterodimers. Only shows activity in the heterodimer.

The catalysed reaction is aldehydo-D-ribose 5-phosphate + D-glyceraldehyde 3-phosphate + L-glutamine = pyridoxal 5'-phosphate + L-glutamate + phosphate + 3 H2O + H(+). The enzyme catalyses L-glutamine + H2O = L-glutamate + NH4(+). The protein operates within cofactor biosynthesis; pyridoxal 5'-phosphate biosynthesis. Catalyzes the hydrolysis of glutamine to glutamate and ammonia as part of the biosynthesis of pyridoxal 5'-phosphate. The resulting ammonia molecule is channeled to the active site of PdxS. This chain is Pyridoxal 5'-phosphate synthase subunit PdxT, found in Exiguobacterium sibiricum (strain DSM 17290 / CCUG 55495 / CIP 109462 / JCM 13490 / 255-15).